A 63-amino-acid chain; its full sequence is Large ribosomal subunit protein bL35 (63 aa).

It belongs to the bacterial ribosomal protein bL35 family.

The protein is Large ribosomal subunit protein bL35 of Campylobacter curvus (strain 525.92).